Reading from the N-terminus, the 216-residue chain is Octanoyltransferase (216 aa).

A BPL/LPL catalytic domain is found at 24-212 (KFRKECILFL…NLCSFLEPIN (189 aa)). Substrate contacts are provided by residues 69-76 (RGGDFTAH), 140-142 (SIG), and 153-155 (GIA). Residue C171 is the Acyl-thioester intermediate of the active site.

The protein belongs to the LipB family.

It localises to the cytoplasm. It catalyses the reaction octanoyl-[ACP] + L-lysyl-[protein] = N(6)-octanoyl-L-lysyl-[protein] + holo-[ACP] + H(+). It participates in protein modification; protein lipoylation via endogenous pathway; protein N(6)-(lipoyl)lysine from octanoyl-[acyl-carrier-protein]: step 1/2. Its function is as follows. Catalyzes the transfer of endogenously produced octanoic acid from octanoyl-acyl-carrier-protein onto the lipoyl domains of lipoate-dependent enzymes. Lipoyl-ACP can also act as a substrate although octanoyl-ACP is likely to be the physiological substrate. The sequence is that of Octanoyltransferase from Leptospira interrogans serogroup Icterohaemorrhagiae serovar Lai (strain 56601).